Here is an 89-residue protein sequence, read N- to C-terminus: Small ribosomal subunit protein uS15 (89 aa).

This sequence belongs to the universal ribosomal protein uS15 family. As to quaternary structure, part of the 30S ribosomal subunit. Forms a bridge to the 50S subunit in the 70S ribosome, contacting the 23S rRNA.

In terms of biological role, one of the primary rRNA binding proteins, it binds directly to 16S rRNA where it helps nucleate assembly of the platform of the 30S subunit by binding and bridging several RNA helices of the 16S rRNA. Forms an intersubunit bridge (bridge B4) with the 23S rRNA of the 50S subunit in the ribosome. This is Small ribosomal subunit protein uS15 from Photobacterium profundum (strain SS9).